We begin with the raw amino-acid sequence, 359 residues long: Tropomodulin-1 (359 aa).

A disordered region spans residues 36–61; sequence ELDPDNALLPAGLRQKDQTTKAPTGP. The tract at residues 39–138 is tropomyosin-binding; the sequence is PDNALLPAGL…CDIAAILGMH (100 aa).

This sequence belongs to the tropomodulin family. In terms of assembly, binds to the N-terminus of tropomyosin and to actin. Interacts with FLII.

The protein localises to the cytoplasm. It localises to the cytoskeleton. Its function is as follows. Blocks the elongation and depolymerization of the actin filaments at the pointed end. The Tmod/TM complex contributes to the formation of the short actin protofilament, which in turn defines the geometry of the membrane skeleton. This is Tropomodulin-1 (Tmod1) from Rattus norvegicus (Rat).